The sequence spans 877 residues: Phosphoenolpyruvate carboxylase (877 aa).

Residues histidine 137 and lysine 544 contribute to the active site.

The protein belongs to the PEPCase type 1 family. Mg(2+) is required as a cofactor.

The enzyme catalyses oxaloacetate + phosphate = phosphoenolpyruvate + hydrogencarbonate. In terms of biological role, forms oxaloacetate, a four-carbon dicarboxylic acid source for the tricarboxylic acid cycle. This Edwardsiella ictaluri (strain 93-146) protein is Phosphoenolpyruvate carboxylase.